The primary structure comprises 504 residues: Glutamate--tRNA ligase (504 aa).

Positions 14–24 (PSPTGYLHVGG) match the 'HIGH' region motif. A 'KMSKS' region motif is present at residues 261-265 (KLSKR). Position 264 (Lys-264) interacts with ATP.

It belongs to the class-I aminoacyl-tRNA synthetase family. Glutamate--tRNA ligase type 1 subfamily. As to quaternary structure, monomer.

The protein resides in the cytoplasm. The enzyme catalyses tRNA(Glu) + L-glutamate + ATP = L-glutamyl-tRNA(Glu) + AMP + diphosphate. In terms of biological role, catalyzes the attachment of glutamate to tRNA(Glu) in a two-step reaction: glutamate is first activated by ATP to form Glu-AMP and then transferred to the acceptor end of tRNA(Glu). The protein is Glutamate--tRNA ligase of Chlorobium luteolum (strain DSM 273 / BCRC 81028 / 2530) (Pelodictyon luteolum).